We begin with the raw amino-acid sequence, 662 residues long: Transcription activator of gluconeogenesis NECHADRAFT_59099 (662 aa).

Residues 1–61 are disordered; the sequence is MPHEMEENGA…KDPLRPRRKK (61 aa). 2 stretches are compositionally biased toward basic and acidic residues: residues 25–34 and 43–56; these read TFLKDDEKMT and TEVK…DPLR. Residues 66-94 constitute a DNA-binding region (zn(2)-C6 fungal-type); it reads CFACQRAHLTCGDERPCQRCIKRGLADAC. 3 disordered regions span residues 105-149, 502-524, and 580-606; these read LHDA…TGSN, YSGR…MTTP, and YRAP…SSRV. Polar residues-rich tracts occupy residues 121 to 130 and 137 to 149; these read YNPTPTPSRT and SSQS…TGSN. A PAS domain is found at 448–519; it reads TLVEYDDFLQ…TNTPDHNSQG (72 aa). Over residues 582–593 the composition is skewed to basic and acidic residues; sequence APQDPDQKEPGS.

It belongs to the ERT1/acuK family.

It localises to the nucleus. In terms of biological role, transcription factor which regulates nonfermentable carbon utilization. Activator of gluconeogenetic genes. In Fusarium vanettenii (strain ATCC MYA-4622 / CBS 123669 / FGSC 9596 / NRRL 45880 / 77-13-4) (Fusarium solani subsp. pisi), this protein is Transcription activator of gluconeogenesis NECHADRAFT_59099.